Consider the following 94-residue polypeptide: RING finger protein Z (94 aa).

A compositionally biased stretch (polar residues) spans 1-19 (MGNCNGASKSNQPDSSRVT). Residues 1–20 (MGNCNGASKSNQPDSSRVTQ) form a disordered region. The N-myristoyl glycine; by host moiety is linked to residue glycine 2. The RING-type; atypical zinc finger occupies 39 to 75 (CKCCWFADTNLITCNDHYLCLRCHQVMLRNSDLCNIC). The short motif at 89-92 (PTAP) is the PTAP/PSAP motif element.

The protein belongs to the arenaviridae Z protein family. Interacts with protein NP; this interaction probably directs the encapsidated genome to budding sites. Interacts (via RING domain) with polymerase L; this interaction inhibits viral transcription and replication, Z partially blocks the product exit tunnel for the releasing nascent RNA product. Interacts with the glycoprotein complex; this interaction plays a role in virion budding. Interacts with host eIF4E; this interaction results in eIF4E reduced affinity for its substrate, the 5'-m7 G cap structure. Interacts (via late-budding domain) with host TSG101; this interaction is essential for budding and release of viral particles. Interacts with host RPLP0; this interaction may serve to load ribosome-like particles inside the virion. Interacts with host PML; this interaction induces PML bodies redistribution in the cytoplasm upon viral infection. In terms of processing, myristoylation is required for the role of RING finger protein Z in assembly and budding.

It is found in the virion. Its subcellular location is the host cytoplasm. It localises to the host perinuclear region. The protein resides in the host cell membrane. Functionally, plays a crucial role in virion assembly and budding. Expressed late in the virus life cycle, it acts as an inhibitor of viral transcription and RNA synthesis by interacting with the viral polymerase L. Presumably recruits the NP encapsidated genome to cellular membranes at budding sites via direct interaction with NP. Plays critical roles in the final steps of viral release by interacting with host TSG101, a member of the vacuolar protein-sorting pathway and using other cellular host proteins involved in vesicle formation pathway. The budding of the virus progeny occurs after association of protein Z with the viral glycoprotein complex SSP-GP1-GP2 at the cell periphery, step that requires myristoylation of protein Z. Also selectively represses protein production by associating with host eIF4E. In cell-based minigenome assay, has an inhibitory effect on the ribonucleoprotein machinery (vRNP), which is responsible for the replication and transcription of the viral genome. The sequence is that of RING finger protein Z from Akodon azarae (Azara's grass mouse).